A 176-amino-acid chain; its full sequence is Ribosome rescue factor SmrB (176 aa).

Positions 98–173 (LDLHGLTQMQ…GTAAILLLVE (76 aa)) constitute a Smr domain.

It belongs to the SmrB family. Associates with collided ribosomes, but not with correctly translating polysomes.

Acts as a ribosome collision sensor. Detects stalled/collided disomes (pairs of ribosomes where the leading ribosome is stalled and a second ribosome has collided with it) and endonucleolytically cleaves mRNA at the 5' boundary of the stalled ribosome. Stalled/collided disomes form a new interface (primarily via the 30S subunits) that binds SmrB. Cleaved mRNA becomes available for tmRNA ligation, leading to ribosomal subunit dissociation and rescue of stalled ribosomes. This is Ribosome rescue factor SmrB from Serratia proteamaculans (strain 568).